Reading from the N-terminus, the 297-residue chain is Release factor glutamine methyltransferase (297 aa).

S-adenosyl-L-methionine is bound by residues Gly-134–Gly-138, Asp-157, and Asn-200. Asn-200 to Tyr-203 contacts substrate.

This sequence belongs to the protein N5-glutamine methyltransferase family. PrmC subfamily.

It catalyses the reaction L-glutaminyl-[peptide chain release factor] + S-adenosyl-L-methionine = N(5)-methyl-L-glutaminyl-[peptide chain release factor] + S-adenosyl-L-homocysteine + H(+). In terms of biological role, methylates the class 1 translation termination release factors RF1/PrfA and RF2/PrfB on the glutamine residue of the universally conserved GGQ motif. This is Release factor glutamine methyltransferase from Bradyrhizobium diazoefficiens (strain JCM 10833 / BCRC 13528 / IAM 13628 / NBRC 14792 / USDA 110).